The chain runs to 131 residues: Small ribosomal subunit protein bS16 (131 aa).

Basic and acidic residues predominate over residues 87–117 (IGKSKQEELRKSEAKTSAKNKKANEEKANEE). The segment at 87 to 131 (IGKSKQEELRKSEAKTSAKNKKANEEKANEEKVEESETLEASSEA) is disordered.

The protein belongs to the bacterial ribosomal protein bS16 family.

The polypeptide is Small ribosomal subunit protein bS16 (Prochlorococcus marinus (strain SARG / CCMP1375 / SS120)).